The chain runs to 397 residues: uncharacterized protein (397 aa).

4 residues coordinate [4Fe-4S] cluster: C8, C14, C17, and C95. Residues Q229, Y258, E279, and D325 each contribute to the S-adenosyl-L-methionine site. C352 (nucleophile) is an active-site residue.

Belongs to the class I-like SAM-binding methyltransferase superfamily. RNA M5U methyltransferase family.

This is an uncharacterized protein from Chlamydia muridarum (strain MoPn / Nigg).